The primary structure comprises 102 residues: Glycoprotein 24A (102 aa).

It belongs to the csb family. O-glycosylated.

The protein localises to the cell surface. Cell-cell adhesion during early development. In Dictyostelium discoideum (Social amoeba), this protein is Glycoprotein 24A (csbA).